The primary structure comprises 1579 residues: Pentafunctional AROM polypeptide (1579 aa).

The interval Met-1–Asp-383 is 3-dehydroquinate synthase. NAD(+) contacts are provided by residues Asp-40–Asn-42, Glu-75–Lys-78, Gly-106–Ile-108, and Asp-111. Arg-122 provides a ligand contact to 7-phospho-2-dehydro-3-deoxy-D-arabino-heptonate. An NAD(+)-binding site is contributed by Thr-131–Ser-132. The 7-phospho-2-dehydro-3-deoxy-D-arabino-heptonate site is built by Asp-138 and Lys-144. Lys-153 contacts NAD(+). Asn-154 lines the 7-phospho-2-dehydro-3-deoxy-D-arabino-heptonate pocket. Residues Trp-171 to Ser-174 and Asn-182 contribute to the NAD(+) site. Glu-186 serves as a coordination point for Zn(2+). Residues Glu-186–Lys-189 and Lys-249 contribute to the 7-phospho-2-dehydro-3-deoxy-D-arabino-heptonate site. Glu-259 functions as the Proton acceptor; for 3-dehydroquinate synthase activity in the catalytic mechanism. 7-phospho-2-dehydro-3-deoxy-D-arabino-heptonate contacts are provided by residues Arg-263–Asn-267 and His-270. Residue His-270 coordinates Zn(2+). Residue His-274 is the Proton acceptor; for 3-dehydroquinate synthase activity of the active site. Residues His-286 and Lys-355 each contribute to the 7-phospho-2-dehydro-3-deoxy-D-arabino-heptonate site. A Zn(2+)-binding site is contributed by His-286. Positions Val-396 to Ala-862 are EPSP synthase. Cys-844 functions as the For EPSP synthase activity in the catalytic mechanism. The tract at residues Ser-881–Cys-1071 is shikimate kinase. Gly-886–Thr-893 provides a ligand contact to ATP. The tract at residues Leu-1072 to Glu-1284 is 3-dehydroquinase. The active-site Proton acceptor; for 3-dehydroquinate dehydratase activity is the His-1189. The Schiff-base intermediate with substrate; for 3-dehydroquinate dehydratase activity role is filled by Lys-1218. The shikimate dehydrogenase stretch occupies residues Lys-1297 to Ile-1579.

In the N-terminal section; belongs to the sugar phosphate cyclases superfamily. Dehydroquinate synthase family. This sequence in the 2nd section; belongs to the EPSP synthase family. It in the 3rd section; belongs to the shikimate kinase family. The protein in the 4th section; belongs to the type-I 3-dehydroquinase family. In the C-terminal section; belongs to the shikimate dehydrogenase family. Homodimer. The cofactor is Zn(2+).

It is found in the cytoplasm. It carries out the reaction 7-phospho-2-dehydro-3-deoxy-D-arabino-heptonate = 3-dehydroquinate + phosphate. The enzyme catalyses 3-dehydroquinate = 3-dehydroshikimate + H2O. It catalyses the reaction shikimate + NADP(+) = 3-dehydroshikimate + NADPH + H(+). The catalysed reaction is shikimate + ATP = 3-phosphoshikimate + ADP + H(+). It carries out the reaction 3-phosphoshikimate + phosphoenolpyruvate = 5-O-(1-carboxyvinyl)-3-phosphoshikimate + phosphate. Its pathway is metabolic intermediate biosynthesis; chorismate biosynthesis; chorismate from D-erythrose 4-phosphate and phosphoenolpyruvate: step 2/7. The protein operates within metabolic intermediate biosynthesis; chorismate biosynthesis; chorismate from D-erythrose 4-phosphate and phosphoenolpyruvate: step 3/7. It participates in metabolic intermediate biosynthesis; chorismate biosynthesis; chorismate from D-erythrose 4-phosphate and phosphoenolpyruvate: step 4/7. It functions in the pathway metabolic intermediate biosynthesis; chorismate biosynthesis; chorismate from D-erythrose 4-phosphate and phosphoenolpyruvate: step 5/7. Its pathway is metabolic intermediate biosynthesis; chorismate biosynthesis; chorismate from D-erythrose 4-phosphate and phosphoenolpyruvate: step 6/7. The AROM polypeptide catalyzes 5 consecutive enzymatic reactions in prechorismate polyaromatic amino acid biosynthesis. In Candida glabrata (strain ATCC 2001 / BCRC 20586 / JCM 3761 / NBRC 0622 / NRRL Y-65 / CBS 138) (Yeast), this protein is Pentafunctional AROM polypeptide.